The chain runs to 887 residues: Microsomal triglyceride transfer protein large subunit (887 aa).

An N-terminal signal peptide occupies residues Phe1 to Ser11. A Vitellogenin domain is found at Leu21–Ile655. An intrachain disulfide couples Cys167 to Cys187.

Heterodimer; heterodimerizes with the protein disulfide isomerase (P4HB/PDI). Interacts with APOB. Interacts with PRAP1.

Its subcellular location is the endoplasmic reticulum. The protein localises to the golgi apparatus. It carries out the reaction a 1,2-diacyl-sn-glycero-3-phosphocholine(in) = a 1,2-diacyl-sn-glycero-3-phosphocholine(out). It catalyses the reaction a 1,2-diacyl-sn-glycero-3-phosphoethanolamine(in) = a 1,2-diacyl-sn-glycero-3-phosphoethanolamine(out). The catalysed reaction is a cholesterol ester(in) = a cholesterol ester(out). The enzyme catalyses a triacyl-sn-glycerol(in) = a triacyl-sn-glycerol(out). Its function is as follows. Catalyzes the transport of triglyceride, cholesteryl ester, and phospholipid between phospholipid surfaces. Required for the assembly and secretion of plasma lipoproteins that contain apolipoprotein B. May be involved in regulating cholesteryl ester biosynthesis in cells that produce lipoproteins. The chain is Microsomal triglyceride transfer protein large subunit (MTTP) from Bos taurus (Bovine).